Here is a 375-residue protein sequence, read N- to C-terminus: Amylovoran biosynthesis protein AmsC (375 aa).

Helical transmembrane passes span 2–22 (AIYWIVSYSILVFCFFELAMI), 31–51 (KILINYFFLIGVFALILFAGI), 93–113 (MVLAWVASCFTHESYFFLLFI), 162–182 (IAFICSLVARNYLLALLFIVL), 208–228 (LPLVLVIASIPLGIIGGKKLF), 256–276 (VFGLANLKNIAFIGAFTLYYF), 287–307 (VYILLIAYSIGAAVRITFSDF), 309–329 (IFGGRVGNLFLHTEPLLFAFL), and 337–357 (LLNFFMLFSITTYYLAYNTIL).

It localises to the cell membrane. The protein operates within glycan metabolism; exopolysaccharide biosynthesis. Functionally, involved in the biosynthesis of amylovoran which functions as a virulence factor. The chain is Amylovoran biosynthesis protein AmsC (amsC) from Erwinia amylovora (Fire blight bacteria).